Here is a 1097-residue protein sequence, read N- to C-terminus: Apolipoprotein B receptor (1097 aa).

5 disordered regions span residues 64–249 (QEDL…KGEE), 262–376 (AWGT…WTTS), 410–739 (EEEG…SRRG), 789–866 (GWDS…ARAE), and 889–1097 (VGWQ…PKPQ). Basic and acidic residues-rich tracts occupy residues 83-92 (GPGDDRRHEV), 158-177 (ERQE…RSWE), and 185-208 (VRAR…ETEG). The span at 209–218 (KAGAVGPKAA) shows a compositional bias: low complexity. Basic and acidic residues-rich tracts occupy residues 219 to 232 (GDNR…READ) and 279 to 302 (GREE…EEAR). Residues 312 to 330 (TASGGEEAETASGGEEAGT) show a composition bias toward low complexity. Positions 331 to 362 (ASGGEEAGIASGGEAGTASGGEEAGTASGGEE) are enriched in gly residues. Phosphoserine is present on S458. Composition is skewed to basic and acidic residues over residues 463-487 (VDLR…RMEE) and 496-505 (EERGSSRDPV). S510 bears the Phosphoserine mark. Residue T572 is modified to Phosphothreonine. S594 bears the Phosphoserine mark. 2 stretches are compositionally biased toward basic and acidic residues: residues 594 to 606 (SKEE…EAGP) and 626 to 637 (NRTRKDMERGNT). The segment covering 640–652 (DAADGEQREEEET) has biased composition (acidic residues). Basic and acidic residues-rich tracts occupy residues 791-800 (DSKEKEEAAA), 892-918 (QERE…RLLD), and 928-950 (RRAE…EEQP). The segment covering 1000–1017 (SRVHLSRSSSQRRSRPSF) has biased composition (basic residues). The segment covering 1041 to 1050 (APEQRPLQLE) has biased composition (low complexity).

Homodimer. In terms of processing, there are 2 forms in macrophages, the membrane-binding proteins 200 kDa (MBP 200) and 235 kDa (MBP 235), that can be reduced into a single active ligand-binding species with intermediate mobility (MBP 200R). As to expression, expressed in peripheral blood leukocytes &gt; bone marrow = spleen &gt; lymph node, and only faintly visible in appendix and thymus. Expressed in the brain, heart, kidney, liver, lung, pancreas, and placenta. Expressed primarily by reticuloendothelial cells: monocytes, macrophages, and endothelial cells. Expressed in atherosclerotic lesion foam cells.

It is found in the cell membrane. Macrophage receptor that binds to the apolipoprotein B48 (APOB) of dietary triglyceride (TG)-rich lipoproteins (TRL) or to a like domain of APOB in hypertriglyceridemic very low density lipoprotein (HTG-VLDL). Binds and internalizes TRL when out of the context of the macrophage. May provide essential lipids to reticuloendothelial cells. Could also be involved in foam cell formation with elevated TRL and remnant lipoprotein (RLP). Mediates the rapid high-affinity uptake of chylomicrons (CM), HTG-VLDL, and trypsinized (tryp) VLDL devoid of APOE in vitro in macrophages. The polypeptide is Apolipoprotein B receptor (Homo sapiens (Human)).